A 56-amino-acid polypeptide reads, in one-letter code: uncharacterized protein (56 aa).

The chain crosses the membrane as a helical span at residues 12–32 (GITLFPYFAILILILAILVVG). The hydrophobic stretch occupies residues 19–31 (FAILILILAILVV).

Its subcellular location is the membrane. This is an uncharacterized protein from Chenopodium amaranticolor (Quinoa).